The following is a 235-amino-acid chain: Segregation and condensation protein A (235 aa).

It belongs to the ScpA family. Component of a cohesin-like complex composed of ScpA, ScpB and the Smc homodimer, in which ScpA and ScpB bind to the head domain of Smc. The presence of the three proteins is required for the association of the complex with DNA.

The protein resides in the cytoplasm. In terms of biological role, participates in chromosomal partition during cell division. May act via the formation of a condensin-like complex containing Smc and ScpB that pull DNA away from mid-cell into both cell halves. The polypeptide is Segregation and condensation protein A (Streptococcus equi subsp. zooepidemicus (strain MGCS10565)).